A 112-amino-acid chain; its full sequence is uncharacterized protein (112 aa).

Helical transmembrane passes span 55–75 and 91–111; these read LLEI…PTLF and LIML…LLLL.

It is found in the membrane. This is an uncharacterized protein from Saccharomyces cerevisiae (strain ATCC 204508 / S288c) (Baker's yeast).